The following is a 339-amino-acid chain: DNA repair protein RAD51 homolog 1 (339 aa).

A disordered region spans residues 1-23; that stretch reads MAMQVQFEASTDTSAEEESFGPE. In terms of domain architecture, HhH spans 48–77; it reads TVESVAHAPKKELLNIKGISEAKADKILAE. Position 127-134 (127-134) interacts with ATP; it reads GEFRTGKT.

The protein belongs to the RecA family. RAD51 subfamily. As to quaternary structure, forms linear homooligomers, giving rise to a RAD51 nucleoprotein filament, which is essential for strand-pairing reactions during DNA recombination. Expressed at high levels in lymphoid and reproductive organs.

The protein localises to the nucleus. It is found in the cytoplasm. The protein resides in the chromosome. Its function is as follows. Plays an important role in homologous strand exchange, a key step in DNA repair through homologous recombination (HR). Binds to single-stranded DNA in an ATP-dependent manner to form nucleoprotein filaments which are essential for the homology search and strand exchange. Catalyzes the recognition of homology and strand exchange between homologous DNA partners to form a joint molecule between a processed DNA break and the repair template. Recruited to resolve stalled replication forks during replication stress. Also involved in interstrand cross-link repair. The protein is DNA repair protein RAD51 homolog 1 (RAD51A) of Gallus gallus (Chicken).